A 339-amino-acid chain; its full sequence is Dihydroorotate dehydrogenase (quinone) (339 aa).

FMN is bound by residues 62 to 66 and T86; that span reads AGMDK. K66 lines the substrate pocket. 111–115 provides a ligand contact to substrate; the sequence is NRMGF. Positions 139 and 172 each coordinate FMN. Residue N172 coordinates substrate. Residue S175 is the Nucleophile of the active site. N177 is a binding site for substrate. FMN is bound by residues K217 and T245. Substrate is bound at residue 246–247; that stretch reads NT. FMN-binding positions include G268, G297, and 318 to 319; that span reads YS.

Belongs to the dihydroorotate dehydrogenase family. Type 2 subfamily. Monomer. Requires FMN as cofactor.

The protein localises to the cell membrane. It carries out the reaction (S)-dihydroorotate + a quinone = orotate + a quinol. It participates in pyrimidine metabolism; UMP biosynthesis via de novo pathway; orotate from (S)-dihydroorotate (quinone route): step 1/1. Functionally, catalyzes the conversion of dihydroorotate to orotate with quinone as electron acceptor. This Shewanella sediminis (strain HAW-EB3) protein is Dihydroorotate dehydrogenase (quinone).